The primary structure comprises 353 residues: UDP-N-acetylglucosamine--N-acetylmuramyl-(pentapeptide) pyrophosphoryl-undecaprenol N-acetylglucosamine transferase (353 aa).

UDP-N-acetyl-alpha-D-glucosamine is bound by residues 10 to 12 (TGG), N124, S183, and Q283.

Belongs to the glycosyltransferase 28 family. MurG subfamily.

The protein localises to the cell inner membrane. The catalysed reaction is di-trans,octa-cis-undecaprenyl diphospho-N-acetyl-alpha-D-muramoyl-L-alanyl-D-glutamyl-meso-2,6-diaminopimeloyl-D-alanyl-D-alanine + UDP-N-acetyl-alpha-D-glucosamine = di-trans,octa-cis-undecaprenyl diphospho-[N-acetyl-alpha-D-glucosaminyl-(1-&gt;4)]-N-acetyl-alpha-D-muramoyl-L-alanyl-D-glutamyl-meso-2,6-diaminopimeloyl-D-alanyl-D-alanine + UDP + H(+). Its pathway is cell wall biogenesis; peptidoglycan biosynthesis. In terms of biological role, cell wall formation. Catalyzes the transfer of a GlcNAc subunit on undecaprenyl-pyrophosphoryl-MurNAc-pentapeptide (lipid intermediate I) to form undecaprenyl-pyrophosphoryl-MurNAc-(pentapeptide)GlcNAc (lipid intermediate II). The protein is UDP-N-acetylglucosamine--N-acetylmuramyl-(pentapeptide) pyrophosphoryl-undecaprenol N-acetylglucosamine transferase of Helicobacter pylori (strain G27).